Consider the following 382-residue polypeptide: Mannitol-1-phosphate 5-dehydrogenase (382 aa).

An NAD(+)-binding site is contributed by 3–14 (ALHFGAGNIGRG). N6-acetyllysine is present on Lys-269.

It belongs to the mannitol dehydrogenase family.

It carries out the reaction D-mannitol 1-phosphate + NAD(+) = beta-D-fructose 6-phosphate + NADH + H(+). The polypeptide is Mannitol-1-phosphate 5-dehydrogenase (Escherichia coli O81 (strain ED1a)).